We begin with the raw amino-acid sequence, 292 residues long: tRNA-cytidine(32) 2-sulfurtransferase (292 aa).

Residues 54–59 carry the PP-loop motif motif; it reads SGGKDS. Residues Cys-129, Cys-132, and Cys-220 each coordinate [4Fe-4S] cluster.

This sequence belongs to the TtcA family. As to quaternary structure, homodimer. Requires Mg(2+) as cofactor. [4Fe-4S] cluster is required as a cofactor.

It localises to the cytoplasm. The enzyme catalyses cytidine(32) in tRNA + S-sulfanyl-L-cysteinyl-[cysteine desulfurase] + AH2 + ATP = 2-thiocytidine(32) in tRNA + L-cysteinyl-[cysteine desulfurase] + A + AMP + diphosphate + H(+). It functions in the pathway tRNA modification. In terms of biological role, catalyzes the ATP-dependent 2-thiolation of cytidine in position 32 of tRNA, to form 2-thiocytidine (s(2)C32). The sulfur atoms are provided by the cysteine/cysteine desulfurase (IscS) system. The sequence is that of tRNA-cytidine(32) 2-sulfurtransferase from Cereibacter sphaeroides (strain ATCC 17025 / ATH 2.4.3) (Rhodobacter sphaeroides).